The following is a 208-amino-acid chain: Uracil phosphoribosyltransferase (208 aa).

5-phospho-alpha-D-ribose 1-diphosphate contacts are provided by residues arginine 78, arginine 103, and 130–138 (DPMLATGGS). Residues isoleucine 193 and 198–200 (GDA) each bind uracil. 5-phospho-alpha-D-ribose 1-diphosphate is bound at residue aspartate 199.

Belongs to the UPRTase family. Requires Mg(2+) as cofactor.

It catalyses the reaction UMP + diphosphate = 5-phospho-alpha-D-ribose 1-diphosphate + uracil. Its pathway is pyrimidine metabolism; UMP biosynthesis via salvage pathway; UMP from uracil: step 1/1. Allosterically activated by GTP. Functionally, catalyzes the conversion of uracil and 5-phospho-alpha-D-ribose 1-diphosphate (PRPP) to UMP and diphosphate. The chain is Uracil phosphoribosyltransferase from Yersinia enterocolitica serotype O:8 / biotype 1B (strain NCTC 13174 / 8081).